Here is a 456-residue protein sequence, read N- to C-terminus: Bifunctional protein GlmU (456 aa).

The tract at residues 1–229 (MSNSAMSVVI…LSEVEGVNNR (229 aa)) is pyrophosphorylase. Residues 11–14 (LAAG), Lys25, Gln76, 81–82 (GT), 103–105 (YGD), Gly140, Glu154, Asn169, and Asn227 each bind UDP-N-acetyl-alpha-D-glucosamine. Asp105 contributes to the Mg(2+) binding site. Mg(2+) is bound at residue Asn227. The linker stretch occupies residues 230-250 (LQLARLERVYQAEQAEKLLLA). The interval 251-456 (GVMLRDPARF…QGWQRPVKKK (206 aa)) is N-acetyltransferase. Arg333 and Lys351 together coordinate UDP-N-acetyl-alpha-D-glucosamine. The Proton acceptor role is filled by His363. UDP-N-acetyl-alpha-D-glucosamine-binding residues include Tyr366 and Asn377. Acetyl-CoA-binding positions include Ala380, 386-387 (NY), Ser405, Ala423, and Arg440.

In the N-terminal section; belongs to the N-acetylglucosamine-1-phosphate uridyltransferase family. This sequence in the C-terminal section; belongs to the transferase hexapeptide repeat family. As to quaternary structure, homotrimer. Mg(2+) is required as a cofactor.

Its subcellular location is the cytoplasm. It carries out the reaction alpha-D-glucosamine 1-phosphate + acetyl-CoA = N-acetyl-alpha-D-glucosamine 1-phosphate + CoA + H(+). The catalysed reaction is N-acetyl-alpha-D-glucosamine 1-phosphate + UTP + H(+) = UDP-N-acetyl-alpha-D-glucosamine + diphosphate. The protein operates within nucleotide-sugar biosynthesis; UDP-N-acetyl-alpha-D-glucosamine biosynthesis; N-acetyl-alpha-D-glucosamine 1-phosphate from alpha-D-glucosamine 6-phosphate (route II): step 2/2. Its pathway is nucleotide-sugar biosynthesis; UDP-N-acetyl-alpha-D-glucosamine biosynthesis; UDP-N-acetyl-alpha-D-glucosamine from N-acetyl-alpha-D-glucosamine 1-phosphate: step 1/1. It functions in the pathway bacterial outer membrane biogenesis; LPS lipid A biosynthesis. Catalyzes the last two sequential reactions in the de novo biosynthetic pathway for UDP-N-acetylglucosamine (UDP-GlcNAc). The C-terminal domain catalyzes the transfer of acetyl group from acetyl coenzyme A to glucosamine-1-phosphate (GlcN-1-P) to produce N-acetylglucosamine-1-phosphate (GlcNAc-1-P), which is converted into UDP-GlcNAc by the transfer of uridine 5-monophosphate (from uridine 5-triphosphate), a reaction catalyzed by the N-terminal domain. This chain is Bifunctional protein GlmU, found in Klebsiella pneumoniae subsp. pneumoniae (strain ATCC 700721 / MGH 78578).